The chain runs to 457 residues: Exodeoxyribonuclease 7 large subunit (457 aa).

The protein belongs to the XseA family. In terms of assembly, heterooligomer composed of large and small subunits.

It is found in the cytoplasm. The catalysed reaction is Exonucleolytic cleavage in either 5'- to 3'- or 3'- to 5'-direction to yield nucleoside 5'-phosphates.. Its function is as follows. Bidirectionally degrades single-stranded DNA into large acid-insoluble oligonucleotides, which are then degraded further into small acid-soluble oligonucleotides. In Citrobacter koseri (strain ATCC BAA-895 / CDC 4225-83 / SGSC4696), this protein is Exodeoxyribonuclease 7 large subunit.